The chain runs to 291 residues: METVRAPATSANLGSGFDVFGVALDRPADIVRVERADKTTIEVTGVGSQYIPEDPHSNVVGAVAEALDAPAQIQIDKGVRPSSGLGSSAASAAAAAVALNGLYDRGLSRTELVPIAAEGEAIVSGEAHVDNVAPALLGGFTIARNSTVTTVDTTIPLVACLPEIAVSTRDARRVVPDSITMEEAVHTVGSAATLTVGMCQSNPALVGAGMDEHVVTPARAELVTGYDTVREAALTAGATGVTVSGAGPAILAVCKAERRRAVAAAMIDAFETADVEARAYQTCVSAGATLF.

Residue 80 to 90 (RPSSGLGSSAA) participates in ATP binding.

This sequence belongs to the GHMP kinase family. Homoserine kinase subfamily.

It is found in the cytoplasm. It carries out the reaction L-homoserine + ATP = O-phospho-L-homoserine + ADP + H(+). It functions in the pathway amino-acid biosynthesis; L-threonine biosynthesis; L-threonine from L-aspartate: step 4/5. Its function is as follows. Catalyzes the ATP-dependent phosphorylation of L-homoserine to L-homoserine phosphate. This chain is Homoserine kinase, found in Haloquadratum walsbyi (strain DSM 16790 / HBSQ001).